The following is a 312-amino-acid chain: Glyoxylate/hydroxypyruvate reductase A (312 aa).

The active site involves Arg227. His275 functions as the Proton donor in the catalytic mechanism.

It belongs to the D-isomer specific 2-hydroxyacid dehydrogenase family. GhrA subfamily.

The protein localises to the cytoplasm. The catalysed reaction is glycolate + NADP(+) = glyoxylate + NADPH + H(+). It carries out the reaction (R)-glycerate + NAD(+) = 3-hydroxypyruvate + NADH + H(+). It catalyses the reaction (R)-glycerate + NADP(+) = 3-hydroxypyruvate + NADPH + H(+). Functionally, catalyzes the NADPH-dependent reduction of glyoxylate and hydroxypyruvate into glycolate and glycerate, respectively. The sequence is that of Glyoxylate/hydroxypyruvate reductase A from Escherichia coli O7:K1 (strain IAI39 / ExPEC).